A 440-amino-acid polypeptide reads, in one-letter code: MKPLTSLLLSAALSAAAPHPASPQAPLADIPSIVGETRTEFSQNSLDDVVNASPLLSFHRDLVSIESISGNEGAAGAFVADFLASHNFTVIKQPVTTESDARFNIFAIPESQYHSLDESHSSHSPQILLTSHIDTVPPFIPYSLHRDANDTDDRNILIAGRGTVDAKGSVAAQIFAALDILAAQPSAPLGLLFVVGEETGGDGMKAFSQSTHLNPSPSRFHTVIFGEPTELALVAGHKGMLGFEVAAHGHAAHSGYPWLGESAISAILPALARVDQLGDIPVEEGGLPASDKYGRTTVNIGRMEGGVATNVVPSKARAGVAVRLAAGTHDEAREVVLKAVRDVTGGDDRVVVNFSLEGYGPQDLDTDVPGFNITTVNYGTDVPNLQLHPRPDGKVRRYLYGPGTIHVAHGDNEALTVAQLEEAVRGYKKLIQAALDRSAS.

Positions 1-16 (MKPLTSLLLSAALSAA) are cleaved as a signal peptide. Asn87 and Asn149 each carry an N-linked (GlcNAc...) asparagine glycan. A Zn(2+)-binding site is contributed by Asp165. Residue Glu197 is the Proton acceptor of the active site. Glu198 serves as a coordination point for Zn(2+). N-linked (GlcNAc...) asparagine glycans are attached at residues Asn353 and Asn372.

This sequence belongs to the peptidase M20A family. Zn(2+) serves as cofactor.

The protein localises to the secreted. The sequence is that of Probable carboxypeptidase AFUB_072730 from Aspergillus fumigatus (strain CBS 144.89 / FGSC A1163 / CEA10) (Neosartorya fumigata).